The chain runs to 262 residues: Phosphatidylserine decarboxylase proenzyme (262 aa).

Catalysis depends on charge relay system; for autoendoproteolytic cleavage activity residues D86, H142, and S226. The Schiff-base intermediate with substrate; via pyruvic acid; for decarboxylase activity role is filled by S226. S226 bears the Pyruvic acid (Ser); by autocatalysis mark.

This sequence belongs to the phosphatidylserine decarboxylase family. PSD-B subfamily. Prokaryotic type I sub-subfamily. In terms of assembly, heterodimer of a large membrane-associated beta subunit and a small pyruvoyl-containing alpha subunit. Pyruvate is required as a cofactor. Is synthesized initially as an inactive proenzyme. Formation of the active enzyme involves a self-maturation process in which the active site pyruvoyl group is generated from an internal serine residue via an autocatalytic post-translational modification. Two non-identical subunits are generated from the proenzyme in this reaction, and the pyruvate is formed at the N-terminus of the alpha chain, which is derived from the carboxyl end of the proenzyme. The autoendoproteolytic cleavage occurs by a canonical serine protease mechanism, in which the side chain hydroxyl group of the serine supplies its oxygen atom to form the C-terminus of the beta chain, while the remainder of the serine residue undergoes an oxidative deamination to produce ammonia and the pyruvoyl prosthetic group on the alpha chain. During this reaction, the Ser that is part of the protease active site of the proenzyme becomes the pyruvoyl prosthetic group, which constitutes an essential element of the active site of the mature decarboxylase.

It localises to the cell membrane. It catalyses the reaction a 1,2-diacyl-sn-glycero-3-phospho-L-serine + H(+) = a 1,2-diacyl-sn-glycero-3-phosphoethanolamine + CO2. Its pathway is phospholipid metabolism; phosphatidylethanolamine biosynthesis; phosphatidylethanolamine from CDP-diacylglycerol: step 2/2. Its function is as follows. Catalyzes the formation of phosphatidylethanolamine (PtdEtn) from phosphatidylserine (PtdSer). This Bacillus mycoides (strain KBAB4) (Bacillus weihenstephanensis) protein is Phosphatidylserine decarboxylase proenzyme.